The sequence spans 188 residues: Protein SSX4 (188 aa).

Positions 20-83 (KLRKAFDDIA…KRAADFHGND (64 aa)) constitute a KRAB-related domain. A compositionally biased stretch (basic and acidic residues) spans 116 to 127 (PAEEENGLKEVP). The segment at 116 to 167 (PAEEENGLKEVPEASGPQNDGKQLCPPGNPSTLEKINKTSGPKRGKHAWTHR) is disordered. The span at 145 to 155 (PSTLEKINKTS) shows a compositional bias: polar residues. Residues 156-167 (GPKRGKHAWTHR) are compositionally biased toward basic residues.

The protein belongs to the SSX family.

Its function is as follows. Could act as a modulator of transcription. This Homo sapiens (Human) protein is Protein SSX4 (SSX4).